Here is a 380-residue protein sequence, read N- to C-terminus: Queuine tRNA-ribosyltransferase (380 aa).

Catalysis depends on Asp96, which acts as the Proton acceptor. Substrate is bound by residues 96–100 (DSGGF), Asp150, Gln193, and Gly220. Residues 251–257 (GVGAPDS) are RNA binding. Residue Asp270 is the Nucleophile of the active site. The tract at residues 275–279 (TRIAR) is RNA binding; important for wobble base 34 recognition. 4 residues coordinate Zn(2+): Cys308, Cys310, Cys313, and His339.

It belongs to the queuine tRNA-ribosyltransferase family. In terms of assembly, homodimer. Within each dimer, one monomer is responsible for RNA recognition and catalysis, while the other monomer binds to the replacement base PreQ1. The cofactor is Zn(2+).

It carries out the reaction 7-aminomethyl-7-carbaguanine + guanosine(34) in tRNA = 7-aminomethyl-7-carbaguanosine(34) in tRNA + guanine. Its pathway is tRNA modification; tRNA-queuosine biosynthesis. Catalyzes the base-exchange of a guanine (G) residue with the queuine precursor 7-aminomethyl-7-deazaguanine (PreQ1) at position 34 (anticodon wobble position) in tRNAs with GU(N) anticodons (tRNA-Asp, -Asn, -His and -Tyr). Catalysis occurs through a double-displacement mechanism. The nucleophile active site attacks the C1' of nucleotide 34 to detach the guanine base from the RNA, forming a covalent enzyme-RNA intermediate. The proton acceptor active site deprotonates the incoming PreQ1, allowing a nucleophilic attack on the C1' of the ribose to form the product. After dissociation, two additional enzymatic reactions on the tRNA convert PreQ1 to queuine (Q), resulting in the hypermodified nucleoside queuosine (7-(((4,5-cis-dihydroxy-2-cyclopenten-1-yl)amino)methyl)-7-deazaguanosine). The protein is Queuine tRNA-ribosyltransferase of Streptococcus pneumoniae (strain ATCC BAA-255 / R6).